The following is a 293-amino-acid chain: NAD kinase (293 aa).

The Proton acceptor role is filled by Asp72. NAD(+) contacts are provided by residues 72 to 73 (DG), 146 to 147 (ND), Arg157, Arg174, Asp176, 187 to 192 (TAYALS), and Gln247.

It belongs to the NAD kinase family. The cofactor is a divalent metal cation.

The protein resides in the cytoplasm. It catalyses the reaction NAD(+) + ATP = ADP + NADP(+) + H(+). Its function is as follows. Involved in the regulation of the intracellular balance of NAD and NADP, and is a key enzyme in the biosynthesis of NADP. Catalyzes specifically the phosphorylation on 2'-hydroxyl of the adenosine moiety of NAD to yield NADP. The protein is NAD kinase of Chromohalobacter salexigens (strain ATCC BAA-138 / DSM 3043 / CIP 106854 / NCIMB 13768 / 1H11).